A 299-amino-acid chain; its full sequence is Putative ankyrin repeat protein R864 (299 aa).

ANK repeat units lie at residues Ser-78–Ser-107, Asn-108–Ser-137, Asn-139–Ser-167, Asn-168–Ser-197, Tyr-199–Ala-227, Tyr-228–Asn-257, and Asp-258–Thr-287.

The chain is Putative ankyrin repeat protein R864 from Acanthamoeba polyphaga mimivirus (APMV).